A 336-amino-acid chain; its full sequence is Ribose-phosphate pyrophosphokinase 1 (336 aa).

4 residues coordinate Mg(2+): Asp150, His152, Asp161, and Asp165. Residues 236–251 (GKVAVMVDDMIDTAGT) form a binding of phosphoribosylpyrophosphate region.

It belongs to the ribose-phosphate pyrophosphokinase family.

It carries out the reaction D-ribose 5-phosphate + ATP = 5-phospho-alpha-D-ribose 1-diphosphate + AMP + H(+). The polypeptide is Ribose-phosphate pyrophosphokinase 1 (PRS1) (Spinacia oleracea (Spinach)).